The primary structure comprises 128 residues: Fluoride-specific ion channel FluC (128 aa).

The next 4 helical transmembrane spans lie at 4–24 (LLLA…RYLI), 39–59 (GTLI…EFSM), 71–91 (FLTT…YETI), and 99–119 (ITLG…FVVI). Na(+) contacts are provided by G78 and T81.

Belongs to the fluoride channel Fluc/FEX (TC 1.A.43) family.

The protein resides in the cell membrane. The enzyme catalyses fluoride(in) = fluoride(out). Its activity is regulated as follows. Na(+) is not transported, but it plays an essential structural role and its presence is essential for fluoride channel function. In terms of biological role, fluoride-specific ion channel. Important for reducing fluoride concentration in the cell, thus reducing its toxicity. In Clostridium perfringens (strain ATCC 13124 / DSM 756 / JCM 1290 / NCIMB 6125 / NCTC 8237 / Type A), this protein is Fluoride-specific ion channel FluC.